A 170-amino-acid polypeptide reads, in one-letter code: Protein AIG2 A (170 aa).

Residue 15–20 coordinates substrate; it reads YGSFQE. The Proton acceptor role is filled by glutamate 83. A compositionally biased stretch (basic and acidic residues) spans 147–162; that stretch reads KNPNGRSREEFEKFVQ. A disordered region spans residues 147 to 170; the sequence is KNPNGRSREEFEKFVQDDSSPASA.

Belongs to the gamma-glutamylcyclotransferase family. Ubiquitous.

Functionally, putative gamma-glutamylcyclotransferase. The polypeptide is Protein AIG2 A (Arabidopsis thaliana (Mouse-ear cress)).